The sequence spans 133 residues: Aspartate 1-decarboxylase (133 aa).

Serine 26 acts as the Schiff-base intermediate with substrate; via pyruvic acid in catalysis. Serine 26 carries the post-translational modification Pyruvic acid (Ser). Threonine 58 lines the substrate pocket. Residue tyrosine 59 is the Proton donor of the active site. 74 to 76 (GAA) provides a ligand contact to substrate.

The protein belongs to the PanD family. As to quaternary structure, heterooctamer of four alpha and four beta subunits. The cofactor is pyruvate. Post-translationally, is synthesized initially as an inactive proenzyme, which is activated by self-cleavage at a specific serine bond to produce a beta-subunit with a hydroxyl group at its C-terminus and an alpha-subunit with a pyruvoyl group at its N-terminus.

The protein localises to the cytoplasm. The catalysed reaction is L-aspartate + H(+) = beta-alanine + CO2. It functions in the pathway cofactor biosynthesis; (R)-pantothenate biosynthesis; beta-alanine from L-aspartate: step 1/1. Its function is as follows. Catalyzes the pyruvoyl-dependent decarboxylation of aspartate to produce beta-alanine. The chain is Aspartate 1-decarboxylase from Legionella pneumophila (strain Paris).